A 312-amino-acid polypeptide reads, in one-letter code: L-lactate dehydrogenase (312 aa).

Residues V14, D35, and Y66 each contribute to the NAD(+) site. Substrate is bound by residues Q83 and R90. Residues S103, 120–122 (ASN), and S145 each bind NAD(+). Position 122–125 (122–125 (NPVD)) interacts with substrate. Substrate is bound at residue 150–153 (DSAR). H177 functions as the Proton acceptor in the catalytic mechanism. Position 220 is a phosphotyrosine (Y220). Residue T229 coordinates substrate.

It belongs to the LDH/MDH superfamily. LDH family. In terms of assembly, homotetramer.

It is found in the cytoplasm. It carries out the reaction (S)-lactate + NAD(+) = pyruvate + NADH + H(+). The protein operates within fermentation; pyruvate fermentation to lactate; (S)-lactate from pyruvate: step 1/1. Catalyzes the conversion of lactate to pyruvate. In Mycoplasma genitalium (strain ATCC 33530 / DSM 19775 / NCTC 10195 / G37) (Mycoplasmoides genitalium), this protein is L-lactate dehydrogenase.